Consider the following 219-residue polypeptide: Elongation factor Ts (219 aa).

Residues Thr82–Val85 form an involved in Mg(2+) ion dislocation from EF-Tu region.

This sequence belongs to the EF-Ts family.

The protein resides in the cytoplasm. In terms of biological role, associates with the EF-Tu.GDP complex and induces the exchange of GDP to GTP. It remains bound to the aminoacyl-tRNA.EF-Tu.GTP complex up to the GTP hydrolysis stage on the ribosome. In Anaeromyxobacter sp. (strain K), this protein is Elongation factor Ts.